The following is a 412-amino-acid chain: Phosphoglycerate kinase (412 aa).

Residues 24 to 26, Arg44, 67 to 70, Arg126, and Arg170 each bind substrate; these read DLN and HLGR. ATP is bound by residues Lys220, Gly308, Glu339, and 368-371; that span reads GGDS.

Belongs to the phosphoglycerate kinase family. As to quaternary structure, monomer.

It is found in the cytoplasm. The enzyme catalyses (2R)-3-phosphoglycerate + ATP = (2R)-3-phospho-glyceroyl phosphate + ADP. Its pathway is carbohydrate degradation; glycolysis; pyruvate from D-glyceraldehyde 3-phosphate: step 2/5. The protein is Phosphoglycerate kinase of Mycobacteroides abscessus (strain ATCC 19977 / DSM 44196 / CCUG 20993 / CIP 104536 / JCM 13569 / NCTC 13031 / TMC 1543 / L948) (Mycobacterium abscessus).